Consider the following 222-residue polypeptide: ATP-dependent Clp protease proteolytic subunit 1 (222 aa).

Ser121 (nucleophile) is an active-site residue. Residue His146 is part of the active site.

It belongs to the peptidase S14 family. In terms of assembly, fourteen ClpP subunits assemble into 2 heptameric rings which stack back to back to give a disk-like structure with a central cavity, resembling the structure of eukaryotic proteasomes.

Its subcellular location is the cytoplasm. It carries out the reaction Hydrolysis of proteins to small peptides in the presence of ATP and magnesium. alpha-casein is the usual test substrate. In the absence of ATP, only oligopeptides shorter than five residues are hydrolyzed (such as succinyl-Leu-Tyr-|-NHMec, and Leu-Tyr-Leu-|-Tyr-Trp, in which cleavage of the -Tyr-|-Leu- and -Tyr-|-Trp bonds also occurs).. Its function is as follows. Cleaves peptides in various proteins in a process that requires ATP hydrolysis. Has a chymotrypsin-like activity. Plays a major role in the degradation of misfolded proteins. In Thermobifida fusca (strain YX), this protein is ATP-dependent Clp protease proteolytic subunit 1.